Consider the following 192-residue polypeptide: Ion-translocating oxidoreductase complex subunit A (192 aa).

6 helical membrane passes run 5–25, 39–59, 65–85, 102–122, 134–154, and 171–191; these read LLLL…FLGL, IGMS…SYLV, LPFD…AVVV, ALGI…VALL, AIYG…FSAM, and AIAM…TGLV.

Belongs to the NqrDE/RnfAE family. In terms of assembly, the complex is composed of six subunits: RnfA, RnfB, RnfC, RnfD, RnfE and RnfG.

Its subcellular location is the cell inner membrane. Its function is as follows. Part of a membrane-bound complex that couples electron transfer with translocation of ions across the membrane. The sequence is that of Ion-translocating oxidoreductase complex subunit A from Shewanella putrefaciens (strain CN-32 / ATCC BAA-453).